Reading from the N-terminus, the 237-residue chain is Mediator of RNA polymerase II transcription subunit 20 (237 aa).

This sequence belongs to the Mediator complex subunit 20 family. As to quaternary structure, component of the Mediator complex.

Its subcellular location is the nucleus. Component of the Mediator complex, a coactivator involved in the regulated transcription of nearly all RNA polymerase II-dependent genes. Mediator functions as a bridge to convey information from gene-specific regulatory proteins to the basal RNA polymerase II transcription machinery. Mediator is recruited to promoters by direct interactions with regulatory proteins and serves as a scaffold for the assembly of a functional preinitiation complex with RNA polymerase II and the general transcription factors. The chain is Mediator of RNA polymerase II transcription subunit 20 (SRB2) from Scheffersomyces stipitis (strain ATCC 58785 / CBS 6054 / NBRC 10063 / NRRL Y-11545) (Yeast).